Reading from the N-terminus, the 145-residue chain is 3-dehydroquinate dehydratase (145 aa).

Y24 acts as the Proton acceptor in catalysis. N75, H81, and D88 together coordinate substrate. H101 serves as the catalytic Proton donor. Substrate is bound by residues I102–S103 and R112.

Belongs to the type-II 3-dehydroquinase family. As to quaternary structure, homododecamer.

The catalysed reaction is 3-dehydroquinate = 3-dehydroshikimate + H2O. The protein operates within metabolic intermediate biosynthesis; chorismate biosynthesis; chorismate from D-erythrose 4-phosphate and phosphoenolpyruvate: step 3/7. Its function is as follows. Catalyzes a trans-dehydration via an enolate intermediate. The polypeptide is 3-dehydroquinate dehydratase (aroQ) (Corynebacterium glutamicum (strain ATCC 13032 / DSM 20300 / JCM 1318 / BCRC 11384 / CCUG 27702 / LMG 3730 / NBRC 12168 / NCIMB 10025 / NRRL B-2784 / 534)).